The chain runs to 1931 residues: Cytadherence high molecular weight protein 2 (1931 aa).

3 coiled-coil regions span residues 1626 to 1659 (KEHQ…LTES), 1768 to 1846 (FNTQ…IKTN), and 1903 to 1930 (HAKK…KQTS).

In terms of biological role, component of the cytoskeleton-like structure which stabilizes the shape of the wall-less Mycoplasma. This cytoskeleton-like network of accessory proteins containing HMW proteins 1 to 5 allows the proper anchoring of cytadhesin proteins in the mycoplasmal membrane at the attachment organelle. The polypeptide is Cytadherence high molecular weight protein 2 (hlp2) (Mycoplasmoides gallisepticum (strain R(low / passage 15 / clone 2)) (Mycoplasma gallisepticum)).